A 269-amino-acid polypeptide reads, in one-letter code: ATP synthase subunit delta (269 aa).

It belongs to the ATPase delta chain family. F-type ATPases have 2 components, F(1) - the catalytic core - and F(0) - the membrane proton channel. F(1) has five subunits: alpha(3), beta(3), gamma(1), delta(1), epsilon(1). F(0) has three main subunits: a(1), b(2) and c(10-14). The alpha and beta chains form an alternating ring which encloses part of the gamma chain. F(1) is attached to F(0) by a central stalk formed by the gamma and epsilon chains, while a peripheral stalk is formed by the delta and b chains.

It localises to the cell membrane. In terms of biological role, f(1)F(0) ATP synthase produces ATP from ADP in the presence of a proton or sodium gradient. F-type ATPases consist of two structural domains, F(1) containing the extramembraneous catalytic core and F(0) containing the membrane proton channel, linked together by a central stalk and a peripheral stalk. During catalysis, ATP synthesis in the catalytic domain of F(1) is coupled via a rotary mechanism of the central stalk subunits to proton translocation. Functionally, this protein is part of the stalk that links CF(0) to CF(1). It either transmits conformational changes from CF(0) to CF(1) or is implicated in proton conduction. The polypeptide is ATP synthase subunit delta (Nocardia farcinica (strain IFM 10152)).